The chain runs to 290 residues: Small ribosomal subunit biogenesis GTPase RsgA (290 aa).

In terms of domain architecture, CP-type G spans 62–213 (KNSLVRPPIV…IADTPGFSSL (152 aa)). GTP is bound by residues 111 to 114 (SKLD) and 156 to 164 (GQTGVGKST). Cys237, Cys242, His244, and Cys250 together coordinate Zn(2+).

This sequence belongs to the TRAFAC class YlqF/YawG GTPase family. RsgA subfamily. In terms of assembly, monomer. Associates with 30S ribosomal subunit, binds 16S rRNA. Requires Zn(2+) as cofactor.

It is found in the cytoplasm. One of several proteins that assist in the late maturation steps of the functional core of the 30S ribosomal subunit. Helps release RbfA from mature subunits. May play a role in the assembly of ribosomal proteins into the subunit. Circularly permuted GTPase that catalyzes slow GTP hydrolysis, GTPase activity is stimulated by the 30S ribosomal subunit. This Streptococcus agalactiae serotype V (strain ATCC BAA-611 / 2603 V/R) protein is Small ribosomal subunit biogenesis GTPase RsgA.